The following is a 266-amino-acid chain: Signal peptidase I (266 aa).

Residues Met-1–Ser-20 lie on the Cytoplasmic side of the membrane. Residues Phe-21–Val-41 traverse the membrane as a helical segment. Residues Pro-42–Val-266 lie on the Periplasmic side of the membrane. Catalysis depends on residues Ser-45 and Lys-108.

The protein belongs to the peptidase S26 family.

The protein resides in the cell inner membrane. It catalyses the reaction Cleavage of hydrophobic, N-terminal signal or leader sequences from secreted and periplasmic proteins.. This Rickettsia massiliae (strain Mtu5) protein is Signal peptidase I (lepB).